The chain runs to 1111 residues: Cellulose synthase-like protein D4 (1111 aa).

Disordered stretches follow at residues 1–26 (MAST…KFAR) and 175–202 (DYSS…MMKR). Over residues 192 to 202 (GNNNNMSMMKR) the composition is skewed to polar residues. Transmembrane regions (helical) follow at residues 266–286 (AIIS…CFFL) and 297–317 (AIWL…SWIL). Residues Asp-397 and Asp-809 contribute to the active site. A run of 6 helical transmembrane segments spans residues 891–911 (LFLI…QFIV), 914–934 (LSIS…GLAV), 963–983 (LYAV…SFTL), 1007–1027 (LMIP…VAFI), 1040–1060 (LIGG…FAKG), and 1070–1090 (TIVF…WTAI).

This sequence belongs to the glycosyltransferase 2 family. Plant cellulose synthase-like D subfamily.

It localises to the golgi apparatus membrane. Functionally, thought to be a Golgi-localized beta-glycan synthase that polymerize the backbones of noncellulosic polysaccharides (hemicelluloses) of plant cell wall. This Arabidopsis thaliana (Mouse-ear cress) protein is Cellulose synthase-like protein D4 (CSLD4).